We begin with the raw amino-acid sequence, 704 residues long: ATP-dependent zinc metalloprotease FTSH 5, chloroplastic (704 aa).

Residues 1–58 (MATTSSNPLLLSSNFLGSQIIISAPTPKTTTKSLPFSVISRKRYQISQSEKLMKSLPS) constitute a chloroplast transit peptide. The transit peptide at 59–76 (QAALAALLFSSSSPQALA) directs the protein to the thylakoid. The helical transmembrane segment at 193–213 (FDFIGNLLFPLLAFGGLFYLF) threads the bilayer. Residue 290–297 (GPPGTGKT) coordinates ATP. Residue His-512 participates in Zn(2+) binding. The active site involves Glu-513. Zn(2+) contacts are provided by His-516 and Asp-593.

This sequence in the N-terminal section; belongs to the AAA ATPase family. In the C-terminal section; belongs to the peptidase M41 family. In terms of assembly, heterohexamers with FTSH1, FTSH2 and FTSH8. It depends on Zn(2+) as a cofactor. Ubiquitous.

The protein localises to the plastid. Its subcellular location is the chloroplast thylakoid membrane. Its function is as follows. Part of a complex that function as an ATP-dependent zinc metallopeptidase. Involved in the thylakoid formation and in the removal of damaged D1 in the photosystem II, preventing cell death under high-intensity light conditions. Not involved in the degradation of the light-harvesting complex of photosystem II (LHC II) or in thermotolerance. This is ATP-dependent zinc metalloprotease FTSH 5, chloroplastic (FTSH5) from Arabidopsis thaliana (Mouse-ear cress).